The following is a 276-amino-acid chain: Ribosomal RNA small subunit methyltransferase A (276 aa).

Residues Asn-24, Leu-26, Gly-51, Glu-72, Asp-97, and Asn-118 each contribute to the S-adenosyl-L-methionine site.

It belongs to the class I-like SAM-binding methyltransferase superfamily. rRNA adenine N(6)-methyltransferase family. RsmA subfamily.

The protein resides in the cytoplasm. The enzyme catalyses adenosine(1518)/adenosine(1519) in 16S rRNA + 4 S-adenosyl-L-methionine = N(6)-dimethyladenosine(1518)/N(6)-dimethyladenosine(1519) in 16S rRNA + 4 S-adenosyl-L-homocysteine + 4 H(+). Its function is as follows. Specifically dimethylates two adjacent adenosines (A1518 and A1519) in the loop of a conserved hairpin near the 3'-end of 16S rRNA in the 30S particle. May play a critical role in biogenesis of 30S subunits. The sequence is that of Ribosomal RNA small subunit methyltransferase A from Clostridium acetobutylicum (strain ATCC 824 / DSM 792 / JCM 1419 / IAM 19013 / LMG 5710 / NBRC 13948 / NRRL B-527 / VKM B-1787 / 2291 / W).